The following is a 111-amino-acid chain: Anti-adapter protein IraM (111 aa).

Belongs to the IraM/RssC family.

It is found in the cytoplasm. In terms of biological role, inhibits RpoS proteolysis by regulating RssB activity, thereby increasing the stability of the sigma stress factor RpoS during magnesium starvation. This is Anti-adapter protein IraM from Escherichia coli O127:H6 (strain E2348/69 / EPEC).